The following is a 453-amino-acid chain: MLADLPIALNPHEPTSIPTQLTEQIRRLVARGILTPGDPLPSSRSLSTQLGVSRGSVVTAYDQLAGEGYLSTARGSGTTINPDLHLLKPVEIEKKETSRSVPPPLLNLSPGVPDTATLADSAWRAAWREACAKPPTHSPEQGLLRLRIEIADHLRQMRGLMVEPEQIIVTAGAREGLSLLLRTMDAPARIGVESPGYPSLRRIPQVLGHETIDVPTDESGLVPRALPHDLNALLVTPSHQYPYGGSLPADRRTALVAWAEANDALLIEDDFDSELRYVGMPLPPLRALAPDRTILLGTFSSVITPQVACGYLIAPTPQARVLATLRGILGQPVGAITQHALASYLASGALRRRTQRLRRLYRHRRSIVQDTLGDLPNTQLRPINGGLHAVLLCDKPQDLVVTTLASRGLNVTALSHYWGGTGADNGIVFGFGSHDEDTLRWVLAEISDAVSLG.

An HTH gntR-type domain is found at 15–83; the sequence is TSIPTQLTEQ…RGSGTTINPD (69 aa). Positions 43 to 62 form a DNA-binding region, H-T-H motif; sequence SRSLSTQLGVSRGSVVTAYD.

This sequence in the C-terminal section; belongs to the class-I pyridoxal-phosphate-dependent aminotransferase family. The cofactor is pyridoxal 5'-phosphate.

Functionally, may have a regulatory function in pyridoxine biosynthesis. Is said to also have an aminotransferase activity in valine biosynthesis as a double inactivation of ilvE and pdxR results in an auxotrophic requirement for valine. This is HTH-type pyridoxine biosynthesis transcriptional regulator PdxR (pdxR) from Corynebacterium glutamicum (strain ATCC 13032 / DSM 20300 / JCM 1318 / BCRC 11384 / CCUG 27702 / LMG 3730 / NBRC 12168 / NCIMB 10025 / NRRL B-2784 / 534).